Consider the following 367-residue polypeptide: WD repeat-containing protein 31 (367 aa).

WD repeat units lie at residues 53–90, 94–132, 137–175, 179–217, 221–264, 269–311, and 315–353; these read AFQE…AYNW, NVVK…MWDL, QPRQ…LWDV, QSVE…LWDS, QVAH…LWDL, NRIC…IWNQ, and ACLF…LLRM.

This is WD repeat-containing protein 31 (WDR31) from Homo sapiens (Human).